The primary structure comprises 482 residues: Bifunctional protein GlmU (482 aa).

The segment at 1–238 (MSATSPAAVV…HREILGINNR (238 aa)) is pyrophosphorylase. UDP-N-acetyl-alpha-D-glucosamine-binding positions include 12–15 (LAAG), lysine 26, glutamine 79, and 84–85 (GT). Aspartate 110 is a Mg(2+) binding site. UDP-N-acetyl-alpha-D-glucosamine is bound by residues glycine 147, glutamate 163, asparagine 178, and asparagine 236. Residue asparagine 236 participates in Mg(2+) binding. Positions 239 to 259 (LQLAEARRLLNERLLERAMLA) are linker. The segment at 260–482 (GVTVVDPAST…ASSQETDGQS (223 aa)) is N-acetyltransferase. UDP-N-acetyl-alpha-D-glucosamine-binding residues include arginine 341 and lysine 359. Residue histidine 371 is the Proton acceptor of the active site. UDP-N-acetyl-alpha-D-glucosamine contacts are provided by tyrosine 374 and asparagine 385. Acetyl-CoA is bound by residues alanine 388, 394–395 (NY), serine 413, alanine 431, and arginine 448. Residues 458–482 (VARKRPGSAAAQAAQASSQETDGQS) form a disordered region. Low complexity predominate over residues 465-476 (SAAAQAAQASSQ).

The protein in the N-terminal section; belongs to the N-acetylglucosamine-1-phosphate uridyltransferase family. In the C-terminal section; belongs to the transferase hexapeptide repeat family. In terms of assembly, homotrimer. Requires Mg(2+) as cofactor.

The protein localises to the cytoplasm. It carries out the reaction alpha-D-glucosamine 1-phosphate + acetyl-CoA = N-acetyl-alpha-D-glucosamine 1-phosphate + CoA + H(+). The catalysed reaction is N-acetyl-alpha-D-glucosamine 1-phosphate + UTP + H(+) = UDP-N-acetyl-alpha-D-glucosamine + diphosphate. Its pathway is nucleotide-sugar biosynthesis; UDP-N-acetyl-alpha-D-glucosamine biosynthesis; N-acetyl-alpha-D-glucosamine 1-phosphate from alpha-D-glucosamine 6-phosphate (route II): step 2/2. It functions in the pathway nucleotide-sugar biosynthesis; UDP-N-acetyl-alpha-D-glucosamine biosynthesis; UDP-N-acetyl-alpha-D-glucosamine from N-acetyl-alpha-D-glucosamine 1-phosphate: step 1/1. The protein operates within bacterial outer membrane biogenesis; LPS lipid A biosynthesis. Catalyzes the last two sequential reactions in the de novo biosynthetic pathway for UDP-N-acetylglucosamine (UDP-GlcNAc). The C-terminal domain catalyzes the transfer of acetyl group from acetyl coenzyme A to glucosamine-1-phosphate (GlcN-1-P) to produce N-acetylglucosamine-1-phosphate (GlcNAc-1-P), which is converted into UDP-GlcNAc by the transfer of uridine 5-monophosphate (from uridine 5-triphosphate), a reaction catalyzed by the N-terminal domain. The sequence is that of Bifunctional protein GlmU from Streptomyces griseus subsp. griseus (strain JCM 4626 / CBS 651.72 / NBRC 13350 / KCC S-0626 / ISP 5235).